The primary structure comprises 171 residues: Small ribosomal subunit protein mS25 (171 aa).

Belongs to the mitochondrion-specific ribosomal protein mS25 family. In terms of assembly, component of the mitochondrial ribosome small subunit (28S) which comprises a 12S rRNA and about 30 distinct proteins.

Its subcellular location is the mitochondrion. This chain is Small ribosomal subunit protein mS25 (Mrps25), found in Mus musculus (Mouse).